The sequence spans 156 residues: Small ribosomal subunit protein uS7 (156 aa).

This sequence belongs to the universal ribosomal protein uS7 family. In terms of assembly, part of the 30S ribosomal subunit. Contacts proteins S9 and S11.

One of the primary rRNA binding proteins, it binds directly to 16S rRNA where it nucleates assembly of the head domain of the 30S subunit. Is located at the subunit interface close to the decoding center, probably blocks exit of the E-site tRNA. This is Small ribosomal subunit protein uS7 from Dictyoglomus turgidum (strain DSM 6724 / Z-1310).